Consider the following 239-residue polypeptide: Carboxy-S-adenosyl-L-methionine synthase (239 aa).

Residues Tyr-36, 61 to 63, 111 to 112, Asn-126, and Arg-193 contribute to the S-adenosyl-L-methionine site; these read GCS and DI.

It belongs to the class I-like SAM-binding methyltransferase superfamily. Cx-SAM synthase family. Homodimer.

The catalysed reaction is prephenate + S-adenosyl-L-methionine = carboxy-S-adenosyl-L-methionine + 3-phenylpyruvate + H2O. Functionally, catalyzes the conversion of S-adenosyl-L-methionine (SAM) to carboxy-S-adenosyl-L-methionine (Cx-SAM). The chain is Carboxy-S-adenosyl-L-methionine synthase from Nitratiruptor sp. (strain SB155-2).